The sequence spans 185 residues: Probable DNA-directed RNA polymerase subunit delta (185 aa).

An HTH HARE-type domain is found at 14 to 81; the sequence is LSMIEVAHAI…GDNTWGLRAW (68 aa). Residues 90–185 form a disordered region; it reads ATVGENEEDE…DEEDEDEDDE (96 aa). Acidic residues-rich tracts occupy residues 117 to 167 and 175 to 185; these read DTDD…DDGI and HDEEDEDEDDE.

It belongs to the RpoE family. As to quaternary structure, RNAP is composed of a core of 2 alpha, a beta and a beta' subunits. The core is associated with a delta subunit and one of several sigma factors.

Participates in both the initiation and recycling phases of transcription. In the presence of the delta subunit, RNAP displays an increased specificity of transcription, a decreased affinity for nucleic acids, and an increased efficiency of RNA synthesis because of enhanced recycling. This Limosilactobacillus reuteri (strain DSM 20016) (Lactobacillus reuteri) protein is Probable DNA-directed RNA polymerase subunit delta.